A 346-amino-acid chain; its full sequence is D-alanine--D-alanine ligase (346 aa).

Residues 133–327 enclose the ATP-grasp domain; it reads KLYAKSVGVK…ALADQISLEK (195 aa). 159–211 contacts ATP; sequence LSFPCIIKPARLGSSIGISIVKDEKDLEYAKDVGFEFDNDLVVEEFKNNIKEY. Positions 284, 296, and 298 each coordinate Mg(2+).

It belongs to the D-alanine--D-alanine ligase family. It depends on Mg(2+) as a cofactor. Mn(2+) serves as cofactor.

The protein resides in the cytoplasm. The catalysed reaction is 2 D-alanine + ATP = D-alanyl-D-alanine + ADP + phosphate + H(+). It participates in cell wall biogenesis; peptidoglycan biosynthesis. Cell wall formation. The sequence is that of D-alanine--D-alanine ligase from Campylobacter jejuni subsp. jejuni serotype O:23/36 (strain 81-176).